Here is a 294-residue protein sequence, read N- to C-terminus: 33 kDa chaperonin (294 aa).

2 disulfide bridges follow: Cys-239-Cys-241 and Cys-272-Cys-275.

This sequence belongs to the HSP33 family. In terms of processing, under oxidizing conditions two disulfide bonds are formed involving the reactive cysteines. Under reducing conditions zinc is bound to the reactive cysteines and the protein is inactive.

It localises to the cytoplasm. Redox regulated molecular chaperone. Protects both thermally unfolding and oxidatively damaged proteins from irreversible aggregation. Plays an important role in the bacterial defense system toward oxidative stress. This chain is 33 kDa chaperonin, found in Lacticaseibacillus paracasei (strain ATCC 334 / BCRC 17002 / CCUG 31169 / CIP 107868 / KCTC 3260 / NRRL B-441) (Lactobacillus paracasei).